The sequence spans 141 residues: Lysozyme 1 (141 aa).

Residues 1 to 19 (MKFFIVLVAALALAAPAMG) form the signal peptide. Positions 20-141 (KTFTRCSLAR…GSLPSINDCF (122 aa)) constitute a C-type lysozyme domain. Intrachain disulfides connect Cys25-Cys140, Cys46-Cys130, Cys81-Cys97, and Cys93-Cys111. Residue Glu51 is part of the active site. Residue Asn65 is glycosylated (N-linked (GlcNAc...) asparagine). Asp69 is a catalytic residue. Asn104 carries an N-linked (GlcNAc...) asparagine glycan.

It belongs to the glycosyl hydrolase 22 family.

It catalyses the reaction Hydrolysis of (1-&gt;4)-beta-linkages between N-acetylmuramic acid and N-acetyl-D-glucosamine residues in a peptidoglycan and between N-acetyl-D-glucosamine residues in chitodextrins.. May not function as a self-defense protein, but as a digestive enzyme, probably in the gut of the insect body. Inactive towards Micrococcus luteus. Active toward glycol chitin. This Musca domestica (House fly) protein is Lysozyme 1.